The following is a 257-amino-acid chain: Deoxyribose-phosphate aldolase (257 aa).

The active-site Proton donor/acceptor is the Asp102. Lys166 acts as the Schiff-base intermediate with acetaldehyde in catalysis. Lys198 functions as the Proton donor/acceptor in the catalytic mechanism.

The protein belongs to the DeoC/FbaB aldolase family. DeoC type 2 subfamily.

The protein localises to the cytoplasm. It catalyses the reaction 2-deoxy-D-ribose 5-phosphate = D-glyceraldehyde 3-phosphate + acetaldehyde. It functions in the pathway carbohydrate degradation; 2-deoxy-D-ribose 1-phosphate degradation; D-glyceraldehyde 3-phosphate and acetaldehyde from 2-deoxy-alpha-D-ribose 1-phosphate: step 2/2. In terms of biological role, catalyzes a reversible aldol reaction between acetaldehyde and D-glyceraldehyde 3-phosphate to generate 2-deoxy-D-ribose 5-phosphate. The chain is Deoxyribose-phosphate aldolase from Shewanella halifaxensis (strain HAW-EB4).